Reading from the N-terminus, the 454-residue chain is Response regulator PleD (454 aa).

Response regulatory domains lie at 4–120 (RILV…RSLT) and 155–269 (RVLI…KTQI). Positions 9, 10, 53, and 55 each coordinate Mg(2+). The residue at position 53 (Asp53) is a 4-aspartylphosphate. Positions 319 to 454 (DPVSALLIDI…GRNAVVGKAA (136 aa)) constitute a GGDEF domain. The substrate site is built by Asn335 and Asp344. Glu370 acts as the Proton acceptor in catalysis.

Homodimer. Inactive monomer in solution. Phosphorylated by PleC and DivJ. Phosphorylation stimulates cyclase activity.

The protein localises to the cytoplasm. It catalyses the reaction 2 GTP = 3',3'-c-di-GMP + 2 diphosphate. The protein operates within purine metabolism; 3',5'-cyclic di-GMP biosynthesis. With respect to regulation, allosterically inhibited by the product c-di-GMP. Its function is as follows. Response regulator that is part of a signal transduction pathway controlling cell differentiation in the swarmer-to-stalked cell transition. Catalyzes the condensation of two GTP molecules to the cyclic dinucleotide di-GMP (c-di-GMP), which acts as a secondary messenger. This chain is Response regulator PleD (pleD), found in Caulobacter vibrioides (strain ATCC 19089 / CIP 103742 / CB 15) (Caulobacter crescentus).